The following is a 267-amino-acid chain: Dichloromethane dehalogenase (267 aa).

The GST N-terminal domain occupies 3–85; that stretch reads TKLRYLHHPA…YLSEKYDCSS (83 aa). In terms of domain architecture, GST C-terminal spans 91–224; the sequence is TLEERGHIQQ…AWQYENVRKY (134 aa).

This sequence belongs to the GST superfamily. Homohexamer.

It is found in the cytoplasm. It catalyses the reaction dichloromethane + H2O = formaldehyde + 2 chloride + 2 H(+). The protein operates within xenobiotic degradation; dichloromethane degradation. This Methylophilus leisingeri (strain DSM 6813 / VKM B-2013 / DM11) protein is Dichloromethane dehalogenase (dcmA).